A 381-amino-acid chain; its full sequence is Lipopolysaccharide 1,2-N-acetylglucosaminetransferase (381 aa).

It belongs to the glycosyltransferase group 1 family. Glycosyltransferase 4 subfamily.

It localises to the cell inner membrane. The enzyme catalyses UDP-N-acetyl-alpha-D-glucosamine + [lipopolysaccharide] = UDP + N-acetyl-alpha-D-glucosaminyl-[lipopolysaccharide].. Its pathway is bacterial outer membrane biogenesis; LPS core biosynthesis. Transferase involved in the biosynthesis of the core oligosaccharide region of lipopolysaccharide (LPS). Catalyzes the addition of the terminal N-acetyl-D-glucosamine (GlcNAc) group to the outer-core glucose II, the last step of the lipid A-core oligosaccharide biosynthesis. The protein is Lipopolysaccharide 1,2-N-acetylglucosaminetransferase of Salmonella typhimurium (strain LT2 / SGSC1412 / ATCC 700720).